The following is a 275-amino-acid chain: Tumor necrosis factor receptor superfamily member 14 (275 aa).

An N-terminal signal peptide occupies residues 1 to 38; the sequence is MEPLPGWGSAPWSQAPTDNTFRLVPCVFLLNLLQRISA. TNFR-Cys repeat units lie at residues 41–75, 77–119, and 120–162; these read SCRQEEFLVGDECCPMCNPGYHVKQVCSEHTGTVC, PCPP…DTVC, and RCIP…DTVC. Intrachain disulfides connect cysteine 42/cysteine 53, cysteine 54/cysteine 67, cysteine 57/cysteine 75, cysteine 78/cysteine 93, cysteine 96/cysteine 111, cysteine 99/cysteine 119, cysteine 121/cysteine 138, and cysteine 144/cysteine 162. 2 N-linked (GlcNAc...) asparagine glycosylation sites follow: asparagine 184 and asparagine 197. Residues 211–231 traverse the membrane as a helical segment; that stretch reads VVSILLPLVIVGAGIAGFLIC.

The protein belongs to the tumor necrosis factor receptor superfamily. As to quaternary structure, interacts with TRAF2, TRAF3 and TRAF5. Interacts (via CRD1/TNFR-Cys 1) with CD160; this interaction is direct. Interacts (via CRD1/TNFR-Cys 1) with BTLA; this interaction is direct. N-glycosylated. Expressed at mucosal sites including colon and pulmonary epithelial cells. Expressed in naive T cells.

The protein resides in the cell membrane. Receptor for four distinct ligands: The TNF superfamily members TNFSF14/LIGHT and homotrimeric LTA/lymphotoxin-alpha and the immunoglobulin superfamily members BTLA and CD160, altogether defining a complex stimulatory and inhibitory signaling network. Signals via the TRAF2-TRAF3 E3 ligase pathway to promote immune cell survival and differentiation. Participates in bidirectional cell-cell contact signaling between antigen presenting cells and lymphocytes. In response to ligation of TNFSF14/LIGHT, delivers costimulatory signals to T cells, promoting cell proliferation and effector functions. Interacts with CD160 on NK cells, enhancing IFNG production and anti-tumor immune response. In the context of bacterial infection, acts as a signaling receptor on epithelial cells for CD160 from intraepithelial lymphocytes, triggering the production of antimicrobial proteins and pro-inflammatory cytokines. Upon binding to CD160 on activated CD4+ T cells, down-regulates CD28 costimulatory signaling, restricting memory and alloantigen-specific immune response. May interact in cis (on the same cell) or in trans (on other cells) with BTLA. In cis interactions, appears to play an immune regulatory role inhibiting in trans interactions in naive T cells to maintain a resting state. In trans interactions, can predominate during adaptive immune response to provide survival signals to effector T cells. The protein is Tumor necrosis factor receptor superfamily member 14 of Mus musculus (Mouse).